Here is a 621-residue protein sequence, read N- to C-terminus: Glutathione-regulated potassium-efflux system protein KefC (621 aa).

Transmembrane regions (helical) follow at residues 4-24, 26-46, 54-74, 90-110, 114-134, 149-169, 178-198, 218-237, 238-257, 270-290, 294-314, 326-346, and 359-379; these read HTLI…PIAV, LGLG…PWAL, AILH…GLEL, GALQ…LLGL, VAEL…MQAM, FAVL…IPLL, LMAF…VVVL, VFSA…LEEV, GLSM…SSEY, GLLL…GTLV, LRIV…LWLI, RWFA…FGAA, and ALTL…VLLT. Positions 399–518 constitute an RCK N-terminal domain; sequence QPRVIVAGFG…AGVEAPERET (120 aa). Residues 598-621 form a disordered region; it reads GWQGTEEGRHTGDIADEPENKPSA.

This sequence belongs to the monovalent cation:proton antiporter 2 (CPA2) transporter (TC 2.A.37) family. KefC subfamily. In terms of assembly, homodimer. Interacts with the regulatory subunit KefF.

The protein resides in the cell inner membrane. Functionally, pore-forming subunit of a potassium efflux system that confers protection against electrophiles. Catalyzes K(+)/H(+) antiport. This chain is Glutathione-regulated potassium-efflux system protein KefC, found in Klebsiella pneumoniae subsp. pneumoniae (strain ATCC 700721 / MGH 78578).